The following is a 250-amino-acid chain: Coproheme decarboxylase (250 aa).

Fe-coproporphyrin III contacts are provided by residues Arg131, 145–149 (YPMNK), His172, and Gln185. Tyr145 is a catalytic residue.

Belongs to the ChdC family. Type 1 subfamily. Fe-coproporphyrin III is required as a cofactor.

The enzyme catalyses Fe-coproporphyrin III + 2 H2O2 + 2 H(+) = heme b + 2 CO2 + 4 H2O. It carries out the reaction Fe-coproporphyrin III + H2O2 + H(+) = harderoheme III + CO2 + 2 H2O. The catalysed reaction is harderoheme III + H2O2 + H(+) = heme b + CO2 + 2 H2O. It participates in porphyrin-containing compound metabolism; protoheme biosynthesis. In terms of biological role, involved in coproporphyrin-dependent heme b biosynthesis. Catalyzes the decarboxylation of Fe-coproporphyrin III (coproheme) to heme b (protoheme IX), the last step of the pathway. The reaction occurs in a stepwise manner with a three-propionate intermediate. The sequence is that of Coproheme decarboxylase from Staphylococcus aureus (strain MRSA252).